Consider the following 122-residue polypeptide: Holo-[acyl-carrier-protein] synthase (122 aa).

2 residues coordinate Mg(2+): Asp-8 and Glu-60.

This sequence belongs to the P-Pant transferase superfamily. AcpS family. The cofactor is Mg(2+).

The protein resides in the cytoplasm. The catalysed reaction is apo-[ACP] + CoA = holo-[ACP] + adenosine 3',5'-bisphosphate + H(+). Transfers the 4'-phosphopantetheine moiety from coenzyme A to a Ser of acyl-carrier-protein. In Anaplasma phagocytophilum (strain HZ), this protein is Holo-[acyl-carrier-protein] synthase.